Here is a 205-residue protein sequence, read N- to C-terminus: Ribonuclease HII (205 aa).

Residues 14–205 (SLISGIDEAG…SFRLKQLGEK (192 aa)) form the RNase H type-2 domain. A divalent metal cation is bound by residues Asp-20, Glu-21, and Asp-117.

This sequence belongs to the RNase HII family. Mn(2+) serves as cofactor. The cofactor is Mg(2+).

Its subcellular location is the cytoplasm. It catalyses the reaction Endonucleolytic cleavage to 5'-phosphomonoester.. Functionally, endonuclease that specifically degrades the RNA of RNA-DNA hybrids. The chain is Ribonuclease HII from Chlorobium phaeobacteroides (strain DSM 266 / SMG 266 / 2430).